We begin with the raw amino-acid sequence, 691 residues long: Elongation factor G 1 (691 aa).

Residues 8-282 (ERVRNIGIAA…AVVDYLPAPQ (275 aa)) enclose the tr-type G domain. GTP is bound by residues 17 to 24 (AHIDAGKT), 81 to 85 (DTPGH), and 135 to 138 (NKMD).

The protein belongs to the TRAFAC class translation factor GTPase superfamily. Classic translation factor GTPase family. EF-G/EF-2 subfamily.

It is found in the cytoplasm. Its function is as follows. Catalyzes the GTP-dependent ribosomal translocation step during translation elongation. During this step, the ribosome changes from the pre-translocational (PRE) to the post-translocational (POST) state as the newly formed A-site-bound peptidyl-tRNA and P-site-bound deacylated tRNA move to the P and E sites, respectively. Catalyzes the coordinated movement of the two tRNA molecules, the mRNA and conformational changes in the ribosome. The sequence is that of Elongation factor G 1 from Trichodesmium erythraeum (strain IMS101).